The following is a 168-amino-acid chain: 6,7-dimethyl-8-ribityllumazine synthase (168 aa).

Residues phenylalanine 24, 58–60 (ALE), and 82–84 (AVI) each bind 5-amino-6-(D-ribitylamino)uracil. A (2S)-2-hydroxy-3-oxobutyl phosphate-binding site is contributed by 87 to 88 (ET). The active-site Proton donor is the histidine 90. Asparagine 115 is a binding site for 5-amino-6-(D-ribitylamino)uracil. (2S)-2-hydroxy-3-oxobutyl phosphate is bound at residue arginine 129.

Belongs to the DMRL synthase family.

It carries out the reaction (2S)-2-hydroxy-3-oxobutyl phosphate + 5-amino-6-(D-ribitylamino)uracil = 6,7-dimethyl-8-(1-D-ribityl)lumazine + phosphate + 2 H2O + H(+). The protein operates within cofactor biosynthesis; riboflavin biosynthesis; riboflavin from 2-hydroxy-3-oxobutyl phosphate and 5-amino-6-(D-ribitylamino)uracil: step 1/2. In terms of biological role, catalyzes the formation of 6,7-dimethyl-8-ribityllumazine by condensation of 5-amino-6-(D-ribitylamino)uracil with 3,4-dihydroxy-2-butanone 4-phosphate. This is the penultimate step in the biosynthesis of riboflavin. This is 6,7-dimethyl-8-ribityllumazine synthase from Paraburkholderia xenovorans (strain LB400).